A 105-amino-acid chain; its full sequence is ATP synthase subunit c (105 aa).

Transmembrane regions (helical) follow at residues 3 to 23, 32 to 52, and 78 to 98; these read FLALFFLALAGVAFAHDGGMG, SILGAMIGLGIAAFGGAIGMG, and VAMAMIEAQVIYTLVFAIIAI.

The protein belongs to the ATPase C chain family. F-type ATPases have 2 components, F(1) - the catalytic core - and F(0) - the membrane proton channel. F(1) has five subunits: alpha(3), beta(3), gamma(1), delta(1), epsilon(1). F(0) has three main subunits: a(1), b(2) and c(10-14). The alpha and beta chains form an alternating ring which encloses part of the gamma chain. F(1) is attached to F(0) by a central stalk formed by the gamma and epsilon chains, while a peripheral stalk is formed by the delta and b chains.

It localises to the cell inner membrane. In terms of biological role, f(1)F(0) ATP synthase produces ATP from ADP in the presence of a proton or sodium gradient. F-type ATPases consist of two structural domains, F(1) containing the extramembraneous catalytic core and F(0) containing the membrane proton channel, linked together by a central stalk and a peripheral stalk. During catalysis, ATP synthesis in the catalytic domain of F(1) is coupled via a rotary mechanism of the central stalk subunits to proton translocation. Its function is as follows. Key component of the F(0) channel; it plays a direct role in translocation across the membrane. A homomeric c-ring of between 10-14 subunits forms the central stalk rotor element with the F(1) delta and epsilon subunits. The chain is ATP synthase subunit c from Helicobacter pylori (strain P12).